The chain runs to 87 residues: Selenoprotein W (87 aa).

Residues 10–13 (CGAU) constitute a cross-link (cysteinyl-selenocysteine (Cys-Sec); redox-active). Position 13 (Sec-13) is a non-standard amino acid, selenocysteine. Cys-37 is modified (S-glutathionyl cysteine).

This sequence belongs to the SelWTH family. Selenoprotein W subfamily. Interacts with DPYSL2, PRDX1, YWHAB, YWHAG, HSP70 and HSP90. In terms of tissue distribution, detected in muscle, heart, tongue, brain, lung, spleen, kidney and liver. Highest levels expressed in muscle and heart whereas lowest levels detected in liver (at protein level).

The protein localises to the cytoplasm. Plays a role as a glutathione (GSH)-dependent antioxidant. May be involved in a redox-related process. May play a role in the myopathies of selenium deficiency. This chain is Selenoprotein W, found in Ovis aries (Sheep).